A 795-amino-acid polypeptide reads, in one-letter code: Glycerol-3-phosphate acyltransferase 2, mitochondrial (795 aa).

The interval 1 to 21 (MATMLEGRCQTQPRSSPSGRE) is disordered. At 1–305 (MATMLEGRCQ…LGPRLSALGQ (305 aa)) the chain is on the cytoplasmic side. Polar residues predominate over residues 9–18 (CQTQPRSSPS). Residues 180 to 331 (QLHKGQMKMV…DALLVPVAVT (152 aa)) are acyltransferase. The short motif at 205–210 (HKTLLD) is the HXXXXD motif element. The helical transmembrane segment at 306-332 (AWVGFVVQAVQVGIVPDALLVPVAVTY) threads the bilayer. The Mitochondrial intermembrane portion of the chain corresponds to 333–449 (DLVPDAPCDI…QLLVRRLSCH (117 aa)). The helical transmembrane segment at 450–472 (VLSASVGSSAVMSTAIMATLLLF) threads the bilayer. The Cytoplasmic segment spans residues 473–795 (KHQKLLGEFS…EQFIRQFICS (323 aa)). S656 carries the phosphoserine modification. T660 is modified (phosphothreonine). Phosphoserine is present on residues S662 and S664.

This sequence belongs to the GPAT/DAPAT family. In terms of assembly, interacts with PIWIL2.

It localises to the mitochondrion outer membrane. The enzyme catalyses sn-glycerol 3-phosphate + an acyl-CoA = a 1-acyl-sn-glycero-3-phosphate + CoA. It carries out the reaction a 1-acyl-sn-glycero-3-phosphate + an acyl-CoA = a 1,2-diacyl-sn-glycero-3-phosphate + CoA. It catalyses the reaction 1-(9Z-octadecenoyl)-sn-glycero-3-phosphate + (9Z)-octadecenoyl-CoA = 1,2-di-(9Z-octadecenoyl)-sn-glycero-3-phosphate + CoA. The catalysed reaction is 1-(9Z-octadecenoyl)-sn-glycero-3-phosphate + (5Z,8Z,11Z,14Z)-eicosatetraenoyl-CoA = 1-(9Z)-octadecenoyl-2-(5Z,8Z,11Z,14Z)-eicosatetraenoyl-sn-glycero-3-phosphate + CoA. The enzyme catalyses (5Z,8Z,11Z,14Z)-eicosatetraenoyl-CoA + sn-glycerol 3-phosphate = 1-(5Z,8Z,11Z,14Z-eicosatetraenoyl)-sn-glycero-3-phosphate + CoA. It participates in phospholipid metabolism; CDP-diacylglycerol biosynthesis; CDP-diacylglycerol from sn-glycerol 3-phosphate: step 1/3. With respect to regulation, inhibited by N-ethylmaleimide (NEM). Transfers an acyl-group from acyl-ACP to the sn-1 position of glycerol-3-phosphate producing a lysophosphatidic acid (LPA), an essential step for the triacylglycerol (TAG) and glycerophospholipids. In vitro also transfers an acyl-group from acyl-ACP to the LPA producing a phosphatidic acid (PA). Prefers arachidonoyl-CoA as the acyl donor. Required for primary processing step during piRNA biosynthesis. Molecular mechanisms by which it promotes piRNA biosynthesis are unclear and do not involve its acyltransferase activity. The protein is Glycerol-3-phosphate acyltransferase 2, mitochondrial of Homo sapiens (Human).